The sequence spans 553 residues: Putative transport protein YidE (553 aa).

Helical transmembrane passes span 4-24 (IALTVSILALVAVVGLFIGNV), 28-48 (GVGLGIGGVLFGGIIVGHFVS), 65-85 (FGLILFVYTIGIQVGPGFFAS), 95-115 (LFAVLIVIIGGLVTAILHKLF), and 158-178 (MSYAMAYPFGICGILFTMWML). 2 consecutive RCK C-terminal domains span residues 191 to 276 (QQHE…VIGQ) and 279 to 361 (DTSL…VLGN). The next 6 helical transmembrane spans lie at 371–391 (MLPVFIGIGLGVLLGSIPVFV), 393–413 (GFPAALKLGLAGGPLIMALIL), 439–459 (IVLFLSVVGLKSGGDFIHTLV), 464–484 (LSWIGYGALITAVPLITVGIL), 493–513 (YLTMCGMLAGSMTDPPALAFA), and 533–553 (LVMFLRIITPQLLAVLFWSIG).

Belongs to the AAE transporter (TC 2.A.81) family. YidE subfamily.

It is found in the cell membrane. The chain is Putative transport protein YidE from Escherichia coli O6:K15:H31 (strain 536 / UPEC).